The chain runs to 410 residues: Tryptophan synthase beta chain (410 aa).

Lys-99 is subject to N6-(pyridoxal phosphate)lysine.

Belongs to the TrpB family. As to quaternary structure, tetramer of two alpha and two beta chains. It depends on pyridoxal 5'-phosphate as a cofactor.

The enzyme catalyses (1S,2R)-1-C-(indol-3-yl)glycerol 3-phosphate + L-serine = D-glyceraldehyde 3-phosphate + L-tryptophan + H2O. It participates in amino-acid biosynthesis; L-tryptophan biosynthesis; L-tryptophan from chorismate: step 5/5. Functionally, the beta subunit is responsible for the synthesis of L-tryptophan from indole and L-serine. The sequence is that of Tryptophan synthase beta chain from Pseudomonas fluorescens (strain Pf0-1).